The primary structure comprises 297 residues: Cyclin-dependent kinase 1 (297 aa).

Position 1 is an N-acetylmethionine (Met-1). The residue at position 4 (Tyr-4) is a Phosphotyrosine; by PKR. The region spanning 4–287 (YIKIEKIGEG…GKMALKHPYF (284 aa)) is the Protein kinase domain. Lys-6 and Lys-9 each carry N6-acetyllysine; alternate. Residues Lys-6 and Lys-9 each participate in a glycyl lysine isopeptide (Lys-Gly) (interchain with G-Cter in SUMO2); alternate cross-link. An ATP-binding site is contributed by 10 to 18 (IGEGTYGVV). Thr-14 carries the post-translational modification Phosphothreonine; by PKMYT1. Tyr-15 carries the post-translational modification Phosphotyrosine; by PKMYT1, WEE1, WEE2 and PKC/PRKCD. The residue at position 15 (Tyr-15) is a Phosphotyrosine; by WEE1 and WEE2. Residue Tyr-19 is modified to Phosphotyrosine. A Glycyl lysine isopeptide (Lys-Gly) (interchain with G-Cter in SUMO2) cross-link involves residue Lys-20. ATP is bound at residue Lys-33. At Ser-39 the chain carries Phosphoserine. Residue Tyr-77 is modified to Phosphotyrosine. Asp-128 (proton acceptor) is an active-site residue. Lys-139 participates in a covalent cross-link: Glycyl lysine isopeptide (Lys-Gly) (interchain with G-Cter in SUMO2). At Thr-141 the chain carries Phosphothreonine. A Phosphothreonine; by CAK modification is found at Thr-161. Position 178 is a phosphoserine (Ser-178). Position 222 is a phosphothreonine (Thr-222). Position 245 is an N6-succinyllysine (Lys-245). Residue Ser-248 is modified to Phosphoserine.

Belongs to the protein kinase superfamily. CMGC Ser/Thr protein kinase family. CDC2/CDKX subfamily. Forms a stable but non-covalent complex with a regulatory subunit and with a cyclin. Interacts with cyclins-B (CCNB1, CCNB2 and CCNB3) to form a serine/threonine kinase holoenzyme complex also known as maturation promoting factor (MPF). The cyclin subunit imparts substrate specificity to the complex. Can also form CDK1-cylin-D and CDK1-cyclin-E complexes that phosphorylate RB1 in vitro. Binds to RB1 and other transcription factors such as FOXO1 and RUNX2. Promotes G2-M transition when in complex with a cyclin-B. Interacts with DLGAP5. Binds to the CDK inhibitors CDKN1A/p21 and CDKN1B/p27. Isoform 2 is unable to complex with cyclin-B1 and also fails to bind to CDKN1A/p21. Interacts with catalytically active CCNB1 and RALBP1 during mitosis to form an endocytotic complex during interphase. Associates with cyclins-A and B1 during S-phase in regenerating hepatocytes. Interacts with FANCC. Interacts with CEP63; this interaction recruits CDK1 to centrosomes. Interacts with CENPA. Interacts with NR1D1. Interacts with proteasome subunit PSMA8; to participate in meiosis progression during spermatogenesis. Phosphorylation at Thr-161 by CAK/CDK7 activates kinase activity. Phosphorylation at Thr-14 and Tyr-15 by PKMYT1 prevents nuclear translocation. Phosphorylation at Tyr-15 by WEE1 and WEE2 inhibits the protein kinase activity and acts as a negative regulator of entry into mitosis (G2 to M transition). Phosphorylation by PKMYT1 and WEE1 takes place during mitosis to keep CDK1-cyclin-B complexes inactive until the end of G2. By the end of G2, PKMYT1 and WEE1 are inactivated, but CDC25A and CDC25B are activated. Dephosphorylation by active CDC25A and CDC25B at Thr-14 and Tyr-15, leads to CDK1 activation at the G2-M transition. Phosphorylation at Tyr-15 by WEE2 during oogenesis is required to maintain meiotic arrest in oocytes during the germinal vesicle (GV) stage, a long period of quiescence at dictyate prophase I, leading to prevent meiotic reentry. Phosphorylation by WEE2 is also required for metaphase II exit during egg activation to ensure exit from meiosis in oocytes and promote pronuclear formation. Phosphorylated at Tyr-4 by PKR/EIF2AK2 upon genotoxic stress. This phosphorylation triggers CDK1 polyubiquitination and subsequent proteolysis, thus leading to G2 arrest. In response to UV irradiation, phosphorylation at Tyr-15 by PRKCD activates the G2/M DNA damage checkpoint. In terms of processing, polyubiquitinated upon genotoxic stress.

Its subcellular location is the nucleus. It localises to the cytoplasm. It is found in the mitochondrion. The protein resides in the cytoskeleton. The protein localises to the microtubule organizing center. Its subcellular location is the centrosome. It localises to the spindle. The enzyme catalyses L-seryl-[protein] + ATP = O-phospho-L-seryl-[protein] + ADP + H(+). It catalyses the reaction L-threonyl-[protein] + ATP = O-phospho-L-threonyl-[protein] + ADP + H(+). It carries out the reaction [DNA-directed RNA polymerase] + ATP = phospho-[DNA-directed RNA polymerase] + ADP + H(+). Phosphorylation at Thr-14 or Tyr-15 inactivates the enzyme, while phosphorylation at Thr-161 activates it. Activated through a multistep process; binding to cyclin-B is required for relocation of cyclin-kinase complexes to the nucleus, activated by CAK/CDK7-mediated phosphorylation on Thr-161, and CDC25-mediated dephosphorylation of inhibitory phosphorylation on Thr-14 and Tyr-15. Activity is restricted during S-phase in an ATR-dependent manner to prevent premature entry into G2. Repressed by the CDK inhibitors CDKN1A/p21 and CDKN1B/p27 during the G1 phase and by CDKN1A/p21 at the G1-S checkpoint upon DNA damage. Transient activation by rapid and transient dephosphorylation at Tyr-15 triggered by TGFB1. Functionally, plays a key role in the control of the eukaryotic cell cycle by modulating the centrosome cycle as well as mitotic onset; promotes G2-M transition via association with multiple interphase cyclins. Phosphorylates PARVA/actopaxin, APC, AMPH, APC, BARD1, Bcl-xL/BCL2L1, BRCA2, CALD1, CASP8, CDC7, CDC20, CDC25A, CDC25C, CC2D1A, CENPA, CSNK2 proteins/CKII, FZR1/CDH1, CDK7, CEBPB, CHAMP1, DMD/dystrophin, EEF1 proteins/EF-1, EZH2, KIF11/EG5, EGFR, FANCG, FOS, GFAP, GOLGA2/GM130, GRASP1, UBE2A/hHR6A, HIST1H1 proteins/histone H1, HMGA1, HIVEP3/KRC, KAT5, LMNA, LMNB, LBR, MKI67, LATS1, MAP1B, MAP4, MARCKS, MCM2, MCM4, MKLP1, MLST8, MYB, NEFH, NFIC, NPC/nuclear pore complex, PITPNM1/NIR2, NPM1, NCL, NUCKS1, NPM1/numatrin, ORC1, PRKAR2A, EEF1E1/p18, EIF3F/p47, p53/TP53, NONO/p54NRB, PAPOLA, PLEC/plectin, RB1, TPPP, UL40/R2, RAB4A, RAP1GAP, RBBP8/CtIP, RCC1, RPS6KB1/S6K1, KHDRBS1/SAM68, ESPL1, SKI, BIRC5/survivin, STIP1, TEX14, beta-tubulins, MAPT/TAU, NEDD1, VIM/vimentin, TK1, FOXO1, RUNX1/AML1, SAMHD1, SIRT2, CGAS, ZAR1 and RUNX2. CDK1/CDC2-cyclin-B controls pronuclear union in interphase fertilized eggs. Essential for early stages of embryonic development. During G2 and early mitosis, CDC25A/B/C-mediated dephosphorylation activates CDK1/cyclin complexes which phosphorylate several substrates that trigger at least centrosome separation, Golgi dynamics, nuclear envelope breakdown and chromosome condensation. Once chromosomes are condensed and aligned at the metaphase plate, CDK1 activity is switched off by WEE1- and PKMYT1-mediated phosphorylation to allow sister chromatid separation, chromosome decondensation, reformation of the nuclear envelope and cytokinesis. Phosphorylates KRT5 during prometaphase and metaphase. Inactivated by PKR/EIF2AK2- and WEE1-mediated phosphorylation upon DNA damage to stop cell cycle and genome replication at the G2 checkpoint thus facilitating DNA repair. Reactivated after successful DNA repair through WIP1-dependent signaling leading to CDC25A/B/C-mediated dephosphorylation and restoring cell cycle progression. Catalyzes lamin (LMNA, LMNB1 and LMNB2) phosphorylation at the onset of mitosis, promoting nuclear envelope breakdown. In proliferating cells, CDK1-mediated FOXO1 phosphorylation at the G2-M phase represses FOXO1 interaction with 14-3-3 proteins and thereby promotes FOXO1 nuclear accumulation and transcription factor activity, leading to cell death of postmitotic neurons. The phosphorylation of beta-tubulins regulates microtubule dynamics during mitosis. NEDD1 phosphorylation promotes PLK1-mediated NEDD1 phosphorylation and subsequent targeting of the gamma-tubulin ring complex (gTuRC) to the centrosome, an important step for spindle formation. In addition, CC2D1A phosphorylation regulates CC2D1A spindle pole localization and association with SCC1/RAD21 and centriole cohesion during mitosis. The phosphorylation of Bcl-xL/BCL2L1 after prolongated G2 arrest upon DNA damage triggers apoptosis. In contrast, CASP8 phosphorylation during mitosis prevents its activation by proteolysis and subsequent apoptosis. This phosphorylation occurs in cancer cell lines, as well as in primary breast tissues and lymphocytes. EZH2 phosphorylation promotes H3K27me3 maintenance and epigenetic gene silencing. CALD1 phosphorylation promotes Schwann cell migration during peripheral nerve regeneration. CDK1-cyclin-B complex phosphorylates NCKAP5L and mediates its dissociation from centrosomes during mitosis. Regulates the amplitude of the cyclic expression of the core clock gene BMAL1 by phosphorylating its transcriptional repressor NR1D1, and this phosphorylation is necessary for SCF(FBXW7)-mediated ubiquitination and proteasomal degradation of NR1D1. Phosphorylates EML3 at 'Thr-881' which is essential for its interaction with HAUS augmin-like complex and TUBG1. Phosphorylates CGAS during mitosis, leading to its inhibition, thereby preventing CGAS activation by self DNA during mitosis. Phosphorylates SKA3 during mitosis which promotes SKA3 binding to the NDC80 complex and anchoring of the SKA complex to kinetochores, to enable stable attachment of mitotic spindle microtubules to kinetochores. In Rattus norvegicus (Rat), this protein is Cyclin-dependent kinase 1 (Cdk1).